We begin with the raw amino-acid sequence, 551 residues long: Arginine--tRNA ligase (551 aa).

The short motif at 125-135 is the 'HIGH' region element; the sequence is ANPTGPLHIGH.

Belongs to the class-I aminoacyl-tRNA synthetase family. Monomer.

The protein localises to the cytoplasm. It catalyses the reaction tRNA(Arg) + L-arginine + ATP = L-arginyl-tRNA(Arg) + AMP + diphosphate. This Oleidesulfovibrio alaskensis (strain ATCC BAA-1058 / DSM 17464 / G20) (Desulfovibrio alaskensis) protein is Arginine--tRNA ligase.